Reading from the N-terminus, the 353-residue chain is DNA polymerase IV (353 aa).

The 182-residue stretch at 6–187 folds into the UmuC domain; that stretch reads IIHVDCDCFY…LPVSKLHGVG (182 aa). Mg(2+)-binding residues include Asp10 and Asp105. The active site involves Glu106.

It belongs to the DNA polymerase type-Y family. As to quaternary structure, monomer. Mg(2+) is required as a cofactor.

It localises to the cytoplasm. The catalysed reaction is DNA(n) + a 2'-deoxyribonucleoside 5'-triphosphate = DNA(n+1) + diphosphate. Its function is as follows. Poorly processive, error-prone DNA polymerase involved in untargeted mutagenesis. Copies undamaged DNA at stalled replication forks, which arise in vivo from mismatched or misaligned primer ends. These misaligned primers can be extended by PolIV. Exhibits no 3'-5' exonuclease (proofreading) activity. May be involved in translesional synthesis, in conjunction with the beta clamp from PolIII. The polypeptide is DNA polymerase IV (Pseudomonas fluorescens (strain Pf0-1)).